A 517-amino-acid chain; its full sequence is Ribonuclease Y (517 aa).

A helical transmembrane segment spans residues 4–24; it reads LIYIVILFVGIAAGAFFGISV. The KH domain occupies 207 to 267; that stretch reads TISTVALPND…LRREVARRTI (61 aa). The HD domain occupies 333 to 426; it reads VLAHSVEVAQ…VAAADAISAA (94 aa).

It belongs to the RNase Y family.

Its subcellular location is the cell membrane. Functionally, endoribonuclease that initiates mRNA decay. In Fervidobacterium nodosum (strain ATCC 35602 / DSM 5306 / Rt17-B1), this protein is Ribonuclease Y.